The sequence spans 608 residues: NADH-quinone oxidoreductase subunit C/D (608 aa).

The segment at 1 to 199 is NADH dehydrogenase I subunit C; the sequence is MSAASSLAPQ…EPFHLSTEKE (199 aa). Positions 223–608 are NADH dehydrogenase I subunit D; the sequence is DFMFLNLGPN…IDFVMADVDR (386 aa).

In the N-terminal section; belongs to the complex I 30 kDa subunit family. This sequence in the C-terminal section; belongs to the complex I 49 kDa subunit family. NDH-1 is composed of 13 different subunits. Subunits NuoB, CD, E, F, and G constitute the peripheral sector of the complex.

It is found in the cell inner membrane. The enzyme catalyses a quinone + NADH + 5 H(+)(in) = a quinol + NAD(+) + 4 H(+)(out). In terms of biological role, NDH-1 shuttles electrons from NADH, via FMN and iron-sulfur (Fe-S) centers, to quinones in the respiratory chain. The immediate electron acceptor for the enzyme in this species is believed to be ubiquinone. Couples the redox reaction to proton translocation (for every two electrons transferred, four hydrogen ions are translocated across the cytoplasmic membrane), and thus conserves the redox energy in a proton gradient. In Nitrosospira multiformis (strain ATCC 25196 / NCIMB 11849 / C 71), this protein is NADH-quinone oxidoreductase subunit C/D.